Here is a 131-residue protein sequence, read N- to C-terminus: D-ribose pyranase (131 aa).

Catalysis depends on His-20, which acts as the Proton donor. Residues Asp-28, His-98, and 120–122 (YAN) each bind substrate.

This sequence belongs to the RbsD / FucU family. RbsD subfamily. In terms of assembly, homodecamer.

It localises to the cytoplasm. The catalysed reaction is beta-D-ribopyranose = beta-D-ribofuranose. Its pathway is carbohydrate metabolism; D-ribose degradation; D-ribose 5-phosphate from beta-D-ribopyranose: step 1/2. In terms of biological role, catalyzes the interconversion of beta-pyran and beta-furan forms of D-ribose. In Bacillus cereus (strain ATCC 14579 / DSM 31 / CCUG 7414 / JCM 2152 / NBRC 15305 / NCIMB 9373 / NCTC 2599 / NRRL B-3711), this protein is D-ribose pyranase.